The chain runs to 180 residues: Large ribosomal subunit protein uL5 (180 aa).

Belongs to the universal ribosomal protein uL5 family. Part of the 50S ribosomal subunit; part of the 5S rRNA/L5/L18/L25 subcomplex. Contacts the 5S rRNA and the P site tRNA. Forms a bridge to the 30S subunit in the 70S ribosome.

This is one of the proteins that bind and probably mediate the attachment of the 5S RNA into the large ribosomal subunit, where it forms part of the central protuberance. In the 70S ribosome it contacts protein S13 of the 30S subunit (bridge B1b), connecting the 2 subunits; this bridge is implicated in subunit movement. Contacts the P site tRNA; the 5S rRNA and some of its associated proteins might help stabilize positioning of ribosome-bound tRNAs. This is Large ribosomal subunit protein uL5 from Stenotrophomonas maltophilia (strain K279a).